Reading from the N-terminus, the 838-residue chain is Pentatricopeptide repeat-containing protein At4g19440, chloroplastic (838 aa).

The transit peptide at 1-32 directs the protein to the chloroplast; the sequence is MAALLYFPKISSQMTSSHFISFSPMDLRRLSR. 16 PPR repeats span residues 238 to 268, 272 to 306, 307 to 341, 342 to 376, 377 to 411, 412 to 446, 447 to 481, 482 to 516, 517 to 551, 552 to 586, 587 to 621, 622 to 656, 657 to 691, 692 to 726, 727 to 761, and 762 to 796; these read SKTT…VCKG, DVYL…GVAP, NVVT…GMEP, TLIT…GFPP, NVIV…GLSL, TSST…GFNV, NQGS…NMSP, GGGL…GFVV, DTRT…GCVM, DRVS…GLKP, DNYT…GMLP, DVYT…NVQP, NTVV…GISP, NSAT…GLEP, NVFH…NVHP, and NKIT…GIVP.

This sequence belongs to the PPR family. P subfamily.

It is found in the plastid. The protein resides in the chloroplast. This is Pentatricopeptide repeat-containing protein At4g19440, chloroplastic from Arabidopsis thaliana (Mouse-ear cress).